The following is a 1927-amino-acid chain: Immunoglobulin A1 protease (1927 aa).

Residues 1-42 (MEKYFGEKQERFSFRKLSVGLVSATISSLFFMSVLASSSVDA) form the signal peptide. Residues 43–99 (QETAGVHYKYVADSELSSEEKKQLVYDIPTYVENDDETYYLVYKLNSQNQLAELPNT) constitute a propeptide that is removed on maturation. The LPXTG sorting signal motif lies at 96-100 (LPNTG). T99 is modified (pentaglycyl murein peptidoglycan amidated threonine). A run of 2 helical transmembrane segments spans residues 106 to 125 (QALV…FAVS) and 132 to 154 (KTVL…VHAL). Residues 155–1927 (ENHLLLNYNT…FRRSIFENKK (1773 aa)) are Extracellular-facing. The span at 235-246 (QEQTPVSSTKPT) shows a compositional bias: polar residues. Disordered regions lie at residues 235–305 (QEQT…NPQD), 371–394 (SREI…TKKT), and 426–640 (EAVV…PEKT). Positions 276-296 (LAEHKNLETKKEEKISPKEKT) are enriched in basic and acidic residues. The 80-residue stretch at 314–393 (KPELLYREET…PRIVEKGTKK (80 aa)) folds into the G5 domain. 3 repeat units span residues 419–435 (AIQP…KGEP), 436–452 (EVQP…KGEP), and 453–469 (AVQP…KGEP). The tract at residues 419 to 469 (AIQPELPEAVVSDKGEPEVQPTLPEAVVTDKGEPAVQPELPEAVVSDKGEP) is 3 X 17 AA approximate tandem repeats. Residues 485–511 (VKPETPVEKTKEQGPEKTEEVPVKPTE) show a composition bias toward basic and acidic residues. Polar residues-rich tracts occupy residues 516 to 529 (NPNE…SIQG), 538 to 559 (EDTQ…SNKP), and 568 to 606 (ESNQ…STED). Over residues 609–619 (TKSNTSNSNGN) the composition is skewed to low complexity. Positions 620–640 (EEIKQENELDPDKKVEDPEKT) are enriched in basic and acidic residues. A Zn(2+)-binding site is contributed by H1565. The active site involves E1566. The Zn(2+) site is built by H1569 and E1589.

Belongs to the peptidase M26 family. Zn(2+) serves as cofactor. In terms of processing, the Gram-positive cell-wall anchor motif LPXTG is located in the N-terminal part, in contrast to such motifs in other known streptococcal and staphylococcal proteins. The protease could be cleaved by the sortase and anchored in the membrane via the two potential N-terminal transmembrane domains, whereas the propeptide located prior to the LPXTG motif would remain attached to the cell wall peptidoglycan by an amide bond.

It is found in the secreted. It localises to the cell wall. Its subcellular location is the membrane. It carries out the reaction Cleavage of Pro-|-Thr bond in the hinge region of the heavy chain of human IgA.. Its function is as follows. Zinc metalloproteinase which cleaves human immunoglobulin A1 (IgA1) in the hinge region, rendering it less efficient in coating the surface of colonizing or invading pneumococci. May be responsible for pneumococcal infection and is potentially involved in distinct stages of pneumococcal disease. The chain is Immunoglobulin A1 protease (iga) from Streptococcus pneumoniae.